The sequence spans 156 residues: Ribosomal RNA large subunit methyltransferase H (156 aa).

S-adenosyl-L-methionine is bound by residues Leu72, Gly104, and 123-128 (LGPMTF).

Belongs to the RNA methyltransferase RlmH family. In terms of assembly, homodimer.

It is found in the cytoplasm. The enzyme catalyses pseudouridine(1915) in 23S rRNA + S-adenosyl-L-methionine = N(3)-methylpseudouridine(1915) in 23S rRNA + S-adenosyl-L-homocysteine + H(+). Functionally, specifically methylates the pseudouridine at position 1915 (m3Psi1915) in 23S rRNA. In Nitratidesulfovibrio vulgaris (strain ATCC 29579 / DSM 644 / CCUG 34227 / NCIMB 8303 / VKM B-1760 / Hildenborough) (Desulfovibrio vulgaris), this protein is Ribosomal RNA large subunit methyltransferase H.